Here is a 426-residue protein sequence, read N- to C-terminus: Glutamate-1-semialdehyde 2,1-aminomutase (426 aa).

Lys-265 carries the post-translational modification N6-(pyridoxal phosphate)lysine.

The protein belongs to the class-III pyridoxal-phosphate-dependent aminotransferase family. HemL subfamily. In terms of assembly, homodimer. Requires pyridoxal 5'-phosphate as cofactor.

The protein localises to the cytoplasm. It carries out the reaction (S)-4-amino-5-oxopentanoate = 5-aminolevulinate. It participates in porphyrin-containing compound metabolism; protoporphyrin-IX biosynthesis; 5-aminolevulinate from L-glutamyl-tRNA(Glu): step 2/2. This chain is Glutamate-1-semialdehyde 2,1-aminomutase, found in Actinobacillus pleuropneumoniae serotype 7 (strain AP76).